Here is a 259-residue protein sequence, read N- to C-terminus: MKDVQNEKDPRMVPLKKVGIKDLHWPLKVILKEDGYQSTVAQISCSVDLHREKRGIHMSRFIEVLNKLEVITPQIFEEILDDLIEIMEAKRAHLEIHFPYFTWKESPVSRKKSPLKVDCFVEAEKEKNFSFKIGVRTPVHTLCPCSKEISDYGAHNQRAFVEITVKTRKFIWFEDLVEIAEKNASSPLYTLLKRPDEKFVTEKAYENPRFVEDVARDVALKLEKDPRITWYRVYVESMESIHNHNAFACVEKGDFVLEG.

Belongs to the GTP cyclohydrolase IV family.

The catalysed reaction is GTP + H2O = 7,8-dihydroneopterin 3'-triphosphate + formate + H(+). The protein operates within cofactor biosynthesis; 7,8-dihydroneopterin triphosphate biosynthesis; 7,8-dihydroneopterin triphosphate from GTP: step 1/1. Its function is as follows. Converts GTP to 7,8-dihydroneopterin triphosphate. The chain is GTP cyclohydrolase FolE2 from Thermotoga petrophila (strain ATCC BAA-488 / DSM 13995 / JCM 10881 / RKU-1).